A 256-amino-acid polypeptide reads, in one-letter code: Putative cysteine-rich repeat secretory protein 21 (256 aa).

Residues 1–30 (MYSSVSKRLVSVHILVVVALQLLFIPNVLS) form the signal peptide. 2 Gnk2-homologous domains span residues 37-139 (YLHH…SIDT) and 145-253 (YQNN…LYPF).

This sequence belongs to the cysteine-rich repeat secretory protein family.

Its subcellular location is the secreted. This Arabidopsis thaliana (Mouse-ear cress) protein is Putative cysteine-rich repeat secretory protein 21 (CRRSP21).